A 206-amino-acid polypeptide reads, in one-letter code: 2,3-bisphosphoglycerate-dependent phosphoglycerate mutase (206 aa).

Residues 9–16 (RHGQSEWN), 22–23 (TG), arginine 61, 88–91 (ERDY), lysine 99, 115–116 (RR), and 159–160 (GN) each bind substrate. Catalysis depends on histidine 10, which acts as the Tele-phosphohistidine intermediate. The active-site Proton donor/acceptor is glutamate 88.

It belongs to the phosphoglycerate mutase family. BPG-dependent PGAM subfamily. In terms of assembly, homodimer.

The catalysed reaction is (2R)-2-phosphoglycerate = (2R)-3-phosphoglycerate. It participates in carbohydrate degradation; glycolysis; pyruvate from D-glyceraldehyde 3-phosphate: step 3/5. Catalyzes the interconversion of 2-phosphoglycerate and 3-phosphoglycerate. In Brucella anthropi (strain ATCC 49188 / DSM 6882 / CCUG 24695 / JCM 21032 / LMG 3331 / NBRC 15819 / NCTC 12168 / Alc 37) (Ochrobactrum anthropi), this protein is 2,3-bisphosphoglycerate-dependent phosphoglycerate mutase.